The primary structure comprises 334 residues: Cysteine and histidine-rich domain-containing protein 1 (334 aa).

Zn(2+) contacts are provided by cysteine 5, cysteine 10, cysteine 24, histidine 27, cysteine 42, cysteine 43, cysteine 59, histidine 64, cysteine 156, cysteine 161, cysteine 175, histidine 178, cysteine 193, cysteine 194, cysteine 210, and histidine 215. CHORD domains follow at residues 5-64 (CYNR…KGQH) and 156-215 (CKNG…KGTH). Residues 226 to 315 (VVPCRHDWHQ…AEFMTWARLE (90 aa)) form the CS domain.

In terms of biological role, regulates centrosome duplication. This is Cysteine and histidine-rich domain-containing protein 1 (chordc1) from Xenopus laevis (African clawed frog).